Here is a 313-residue protein sequence, read N- to C-terminus: Ribosomal RNA small subunit methyltransferase H (313 aa).

Residues 35–37 (GGH), Asp55, Phe81, Asp103, and Gln110 contribute to the S-adenosyl-L-methionine site.

Belongs to the methyltransferase superfamily. RsmH family.

It is found in the cytoplasm. It catalyses the reaction cytidine(1402) in 16S rRNA + S-adenosyl-L-methionine = N(4)-methylcytidine(1402) in 16S rRNA + S-adenosyl-L-homocysteine + H(+). Its function is as follows. Specifically methylates the N4 position of cytidine in position 1402 (C1402) of 16S rRNA. This Pseudomonas syringae pv. syringae (strain B728a) protein is Ribosomal RNA small subunit methyltransferase H.